Reading from the N-terminus, the 830-residue chain is Formin-like protein 14 (830 aa).

Residues 1–34 (MAMAMAMPSSSPPLFFSLLNLMLLLLLLAPYCSA) form the signal peptide. The segment covering 40-59 (NNTHHRSSSPTQTTLQQLHS) has biased composition (polar residues). The tract at residues 40–195 (NNTHHRSSSP…NISTLVHPTQ (156 aa)) is disordered. 2 stretches are compositionally biased toward pro residues: residues 61-86 (DSPP…PAPR) and 95-135 (PPPP…PTPK). Over residues 149-160 (YPFTNYPFFPNF) the composition is skewed to low complexity. The chain crosses the membrane as a helical span at residues 203 to 223 (VLQALLLSFLSLCLLLLSALL). The tract at residues 235 to 446 (HHSHSHPNAR…LHSDKLKPGS (212 aa)) is disordered. Residues 314–323 (RPLPPLPRVG) show a composition bias toward pro residues. Positions 324–369 (PPSGEFASRSSASDPSTAPPAAAEASSSSLSPSSPSASSPTLGSSP) are enriched in low complexity. Residues 390-823 (PKRRPQPPEP…MMGRDWNMAA (434 aa)) enclose the FH2 domain. Residues 424-446 (HSPSEKSMRKSRPLHSDKLKPGS) are compositionally biased toward basic and acidic residues.

This sequence belongs to the formin-like family. Class-I subfamily.

It is found in the membrane. The protein is Formin-like protein 14 (FH14) of Oryza sativa subsp. japonica (Rice).